A 623-amino-acid polypeptide reads, in one-letter code: Membrane protein insertase YidC (623 aa).

5 helical membrane passes run 8 to 28, 379 to 399, 449 to 469, 507 to 527, and 543 to 563; these read LILA…LFPP, MGLA…PLAY, LPIL…FVTI, TTMA…SMWL, and IFAW…SGLV. Residues 601–617 are compositionally biased toward low complexity; that stretch reads KPAAQPAGKAANDGAAP. Positions 601–623 are disordered; that stretch reads KPAAQPAGKAANDGAAPAKKRKP.

The protein belongs to the OXA1/ALB3/YidC family. Type 1 subfamily. As to quaternary structure, interacts with the Sec translocase complex via SecD. Specifically interacts with transmembrane segments of nascent integral membrane proteins during membrane integration.

The protein localises to the cell inner membrane. Functionally, required for the insertion and/or proper folding and/or complex formation of integral membrane proteins into the membrane. Involved in integration of membrane proteins that insert both dependently and independently of the Sec translocase complex, as well as at least some lipoproteins. Aids folding of multispanning membrane proteins. The sequence is that of Membrane protein insertase YidC from Cereibacter sphaeroides (strain ATCC 17029 / ATH 2.4.9) (Rhodobacter sphaeroides).